A 101-amino-acid polypeptide reads, in one-letter code: Small ribosomal subunit protein uS14 (101 aa).

The disordered stretch occupies residues 36-72 (GTDESREAARAGIQRLPRDASPIRVRNRDGIDGRPRG). A compositionally biased stretch (basic and acidic residues) spans 61–70 (RNRDGIDGRP).

This sequence belongs to the universal ribosomal protein uS14 family. As to quaternary structure, part of the 30S ribosomal subunit. Contacts proteins S3 and S10.

Binds 16S rRNA, required for the assembly of 30S particles and may also be responsible for determining the conformation of the 16S rRNA at the A site. The protein is Small ribosomal subunit protein uS14 of Clavibacter michiganensis subsp. michiganensis (strain NCPPB 382).